The primary structure comprises 406 residues: Cysteine desulfurase (406 aa).

Lys-226 bears the N6-(pyridoxal phosphate)lysine mark. Cys-364 acts as the Cysteine persulfide intermediate in catalysis.

This sequence belongs to the class-V pyridoxal-phosphate-dependent aminotransferase family. Csd subfamily. Homodimer. Interacts with SufE and the SufBCD complex composed of SufB, SufC and SufD. The interaction with SufE is required to mediate the direct transfer of the sulfur atom from the S-sulfanylcysteine. Pyridoxal 5'-phosphate serves as cofactor.

It localises to the cytoplasm. It catalyses the reaction (sulfur carrier)-H + L-cysteine = (sulfur carrier)-SH + L-alanine. It carries out the reaction L-selenocysteine + AH2 = hydrogenselenide + L-alanine + A + H(+). The protein operates within cofactor biosynthesis; iron-sulfur cluster biosynthesis. Its function is as follows. Cysteine desulfurases mobilize the sulfur from L-cysteine to yield L-alanine, an essential step in sulfur metabolism for biosynthesis of a variety of sulfur-containing biomolecules. Component of the suf operon, which is activated and required under specific conditions such as oxidative stress and iron limitation. Acts as a potent selenocysteine lyase in vitro, that mobilizes selenium from L-selenocysteine. Selenocysteine lyase activity is however unsure in vivo. This chain is Cysteine desulfurase, found in Cronobacter sakazakii (strain ATCC BAA-894) (Enterobacter sakazakii).